We begin with the raw amino-acid sequence, 277 residues long: Large ribosomal subunit protein uL2 (277 aa).

Disordered stretches follow at residues 37 to 60 (KNST…GHKH) and 223 to 265 (VVMN…KRTD). The span at 39 to 49 (STAGRNNNGHI) shows a compositional bias: polar residues. The span at 50–60 (TTRHKGGGHKH) shows a compositional bias: basic residues. Over residues 229-244 (DHPHGGGEGRTGEARE) the composition is skewed to basic and acidic residues.

It belongs to the universal ribosomal protein uL2 family. Part of the 50S ribosomal subunit. Forms a bridge to the 30S subunit in the 70S ribosome.

One of the primary rRNA binding proteins. Required for association of the 30S and 50S subunits to form the 70S ribosome, for tRNA binding and peptide bond formation. It has been suggested to have peptidyltransferase activity; this is somewhat controversial. Makes several contacts with the 16S rRNA in the 70S ribosome. This Neisseria meningitidis serogroup A / serotype 4A (strain DSM 15465 / Z2491) protein is Large ribosomal subunit protein uL2.